The primary structure comprises 232 residues: Phosphoribosylformylglycinamidine synthase subunit PurQ (232 aa).

The 231-residue stretch at 2–232 (KIAIIQFGGT…SMADYITENF (231 aa)) folds into the Glutamine amidotransferase type-1 domain. The active-site Nucleophile is the C86. Catalysis depends on residues H203 and E205.

As to quaternary structure, part of the FGAM synthase complex composed of 1 PurL, 1 PurQ and 2 PurS subunits.

It is found in the cytoplasm. It catalyses the reaction N(2)-formyl-N(1)-(5-phospho-beta-D-ribosyl)glycinamide + L-glutamine + ATP + H2O = 2-formamido-N(1)-(5-O-phospho-beta-D-ribosyl)acetamidine + L-glutamate + ADP + phosphate + H(+). It carries out the reaction L-glutamine + H2O = L-glutamate + NH4(+). It functions in the pathway purine metabolism; IMP biosynthesis via de novo pathway; 5-amino-1-(5-phospho-D-ribosyl)imidazole from N(2)-formyl-N(1)-(5-phospho-D-ribosyl)glycinamide: step 1/2. Part of the phosphoribosylformylglycinamidine synthase complex involved in the purines biosynthetic pathway. Catalyzes the ATP-dependent conversion of formylglycinamide ribonucleotide (FGAR) and glutamine to yield formylglycinamidine ribonucleotide (FGAM) and glutamate. The FGAM synthase complex is composed of three subunits. PurQ produces an ammonia molecule by converting glutamine to glutamate. PurL transfers the ammonia molecule to FGAR to form FGAM in an ATP-dependent manner. PurS interacts with PurQ and PurL and is thought to assist in the transfer of the ammonia molecule from PurQ to PurL. The sequence is that of Phosphoribosylformylglycinamidine synthase subunit PurQ from Methanosarcina acetivorans (strain ATCC 35395 / DSM 2834 / JCM 12185 / C2A).